The primary structure comprises 647 residues: Dihydrolipoyllysine-residue acetyltransferase component of pyruvate dehydrogenase complex (647 aa).

Residues 1–86 (MWRVCARRAQ…LWGSPSRRWY (86 aa)) constitute a mitochondrion transit peptide. Residues 91–167 (HQKVPLPSLS…PVGAIICITV (77 aa)) enclose the Lipoyl-binding 1 domain. S100 bears the Phosphoserine mark. N6-lipoyllysine is present on K132. The tract at residues 184-216 (SAAPAPPAAPAPTPAAPAPSPTPSAQAPGSSYP) is disordered. Over residues 187-205 (PAPPAAPAPTPAAPAPSPT) the composition is skewed to pro residues. A Lipoyl-binding 2 domain is found at 218-294 (HMQVLLPALS…PLGTPLCIIV (77 aa)). Position 259 is an N6-lipoyllysine (K259). The disordered stretch occupies residues 311–352 (VTDLKPPAPPPIPSPAAPVPPAPQPVAPPPSAPRPAAPAGPK). Over residues 316–348 (PPAPPPIPSPAAPVPPAPQPVAPPPSAPRPAAP) the composition is skewed to pro residues. The Peripheral subunit-binding (PSBD) domain maps to 356–393 (FVSPLAKKLAAEKGIDLTQVKGTGPDGRIIKKDIDSFV). CoA is bound at residue R461. K466 is modified (N6-acetyllysine). At K473 the chain carries N6-succinyllysine. S475 provides a ligand contact to CoA. K547 is subject to N6-succinyllysine. The CoA site is built by S566, N567, and G591. Catalysis depends on residues H620 and D624.

The protein belongs to the 2-oxoacid dehydrogenase family. In terms of assembly, part of the pyruvate dehydrogenase complex (PDHc) that is a multi-enzyme complex composed of multiple copies of three enzymes, pyruvate dehydrogenase (subunits PDH1A and PDHB, E1 component), dihydrolipoamide acetyltransferase (DLAT, E2 component), and dihydrolipoamide dehydrogenase (DLD, E3 component) to which is added an additional protein the E3-binding protein (PDHX, E3BP). In terms of structural architecture, the E2 and E3BP components assemble into a 60meric central core with icosahedral symmetry. The central core is decorated with E1 and E3 proteins. Currently, two alternative models for the E2:E3BP stoichiometry are considered as being either 48:12 (E2(48)-E3BP(12)) or 40:20 (E2(40)-E3BP(20)). Interacts with PDK2 and PDK3. Interacts with SIRT4. Interacts with PDHB. It depends on (R)-lipoate as a cofactor. Post-translationally, delipoylated at Lys-132 and Lys-259 by SIRT4, delipoylation decreases the PHD complex activity.

Its subcellular location is the mitochondrion matrix. The enzyme catalyses N(6)-[(R)-dihydrolipoyl]-L-lysyl-[protein] + acetyl-CoA = N(6)-[(R)-S(8)-acetyldihydrolipoyl]-L-lysyl-[protein] + CoA. As part of the pyruvate dehydrogenase complex, catalyzes the transfers of an acetyl group to a lipoic acid moiety. The pyruvate dehydrogenase complex, catalyzes the overall conversion of pyruvate to acetyl-CoA and CO(2), and thereby links cytoplasmic glycolysis and the mitochondrial tricarboxylic acid (TCA) cycle. This chain is Dihydrolipoyllysine-residue acetyltransferase component of pyruvate dehydrogenase complex, found in Bos taurus (Bovine).